Reading from the N-terminus, the 162-residue chain is Crossover junction endodeoxyribonuclease RuvC (162 aa).

Residues Asp-7, Glu-67, and Asp-140 contribute to the active site. Asp-7, Glu-67, and Asp-140 together coordinate Mg(2+).

It belongs to the RuvC family. In terms of assembly, homodimer which binds Holliday junction (HJ) DNA. The HJ becomes 2-fold symmetrical on binding to RuvC with unstacked arms; it has a different conformation from HJ DNA in complex with RuvA. In the full resolvosome a probable DNA-RuvA(4)-RuvB(12)-RuvC(2) complex forms which resolves the HJ. Mg(2+) serves as cofactor.

Its subcellular location is the cytoplasm. The catalysed reaction is Endonucleolytic cleavage at a junction such as a reciprocal single-stranded crossover between two homologous DNA duplexes (Holliday junction).. Its function is as follows. The RuvA-RuvB-RuvC complex processes Holliday junction (HJ) DNA during genetic recombination and DNA repair. Endonuclease that resolves HJ intermediates. Cleaves cruciform DNA by making single-stranded nicks across the HJ at symmetrical positions within the homologous arms, yielding a 5'-phosphate and a 3'-hydroxyl group; requires a central core of homology in the junction. The consensus cleavage sequence is 5'-(A/T)TT(C/G)-3'. Cleavage occurs on the 3'-side of the TT dinucleotide at the point of strand exchange. HJ branch migration catalyzed by RuvA-RuvB allows RuvC to scan DNA until it finds its consensus sequence, where it cleaves and resolves the cruciform DNA. The sequence is that of Crossover junction endodeoxyribonuclease RuvC from Pseudothermotoga lettingae (strain ATCC BAA-301 / DSM 14385 / NBRC 107922 / TMO) (Thermotoga lettingae).